A 163-amino-acid chain; its full sequence is Putative pre-16S rRNA nuclease (163 aa).

The protein belongs to the YqgF nuclease family.

It localises to the cytoplasm. Its function is as follows. Could be a nuclease involved in processing of the 5'-end of pre-16S rRNA. The chain is Putative pre-16S rRNA nuclease from Zymomonas mobilis subsp. mobilis (strain ATCC 31821 / ZM4 / CP4).